The chain runs to 452 residues: Pup--protein ligase (452 aa).

E9 lines the Mg(2+) pocket. ATP is bound at residue R53. Residue Y55 coordinates Mg(2+). The active-site Proton acceptor is D57. E63 lines the Mg(2+) pocket. Residues T66 and W419 each coordinate ATP.

Belongs to the Pup ligase/Pup deamidase family. Pup-conjugating enzyme subfamily.

It carries out the reaction ATP + [prokaryotic ubiquitin-like protein]-L-glutamate + [protein]-L-lysine = ADP + phosphate + N(6)-([prokaryotic ubiquitin-like protein]-gamma-L-glutamyl)-[protein]-L-lysine.. It participates in protein degradation; proteasomal Pup-dependent pathway. The protein operates within protein modification; protein pupylation. Catalyzes the covalent attachment of the prokaryotic ubiquitin-like protein modifier Pup to the proteasomal substrate proteins, thereby targeting them for proteasomal degradation. This tagging system is termed pupylation. The ligation reaction involves the side-chain carboxylate of the C-terminal glutamate of Pup and the side-chain amino group of a substrate lysine. In Geodermatophilus obscurus (strain ATCC 25078 / DSM 43160 / JCM 3152 / CCUG 61914 / KCC A-0152 / KCTC 9177 / NBRC 13315 / NRRL B-3577 / G-20), this protein is Pup--protein ligase.